The following is a 137-amino-acid chain: Actin-depolymerizing factor 2 (137 aa).

One can recognise an ADF-H domain in the interval 5 to 137 (ASGMAVHDDC…GLDVFKSRTN (133 aa)). Serine 6 bears the Phosphoserine mark.

Belongs to the actin-binding proteins ADF family. As to quaternary structure, interacts with AIP1-1.

Its subcellular location is the cytoplasm. It localises to the cytoskeleton. Its function is as follows. Actin-depolymerizing protein. Severs actin filaments (F-actin) and binds to actin monomers. Required for normal cell growth, plant development, cell organ expansion and flowering. Essential for root-knot nematode infection. The polypeptide is Actin-depolymerizing factor 2 (ADF2) (Arabidopsis thaliana (Mouse-ear cress)).